We begin with the raw amino-acid sequence, 179 residues long: UPF0227 protein Sbal_2415 (179 aa).

The protein belongs to the UPF0227 family.

This Shewanella baltica (strain OS155 / ATCC BAA-1091) protein is UPF0227 protein Sbal_2415.